The chain runs to 525 residues: Peptide chain release factor 3 (525 aa).

The 269-residue stretch at 11-279 folds into the tr-type G domain; the sequence is NKRRTFAIIS…TYLQFAPAPS (269 aa). Residues 20 to 27, 88 to 92, and 142 to 145 each bind GTP; these read SHPDAGKT, DTPGH, and NKFD.

Belongs to the TRAFAC class translation factor GTPase superfamily. Classic translation factor GTPase family. PrfC subfamily.

It is found in the cytoplasm. Increases the formation of ribosomal termination complexes and stimulates activities of RF-1 and RF-2. It binds guanine nucleotides and has strong preference for UGA stop codons. It may interact directly with the ribosome. The stimulation of RF-1 and RF-2 is significantly reduced by GTP and GDP, but not by GMP. The protein is Peptide chain release factor 3 of Limosilactobacillus reuteri (strain DSM 20016) (Lactobacillus reuteri).